A 116-amino-acid polypeptide reads, in one-letter code: NADH-quinone oxidoreductase subunit A (116 aa).

The next 3 helical transmembrane spans lie at 3–23 (FTFL…VIAL), 61–81 (FAIL…WAVV), and 88–108 (QGLV…AYAW).

It belongs to the complex I subunit 3 family. As to quaternary structure, NDH-1 is composed of 14 different subunits. Subunits NuoA, H, J, K, L, M, N constitute the membrane sector of the complex.

It is found in the cell inner membrane. It carries out the reaction a quinone + NADH + 5 H(+)(in) = a quinol + NAD(+) + 4 H(+)(out). Its function is as follows. NDH-1 shuttles electrons from NADH, via FMN and iron-sulfur (Fe-S) centers, to quinones in the respiratory chain. The immediate electron acceptor for the enzyme in this species is believed to be a menaquinone. Couples the redox reaction to proton translocation (for every two electrons transferred, four hydrogen ions are translocated across the cytoplasmic membrane), and thus conserves the redox energy in a proton gradient. The protein is NADH-quinone oxidoreductase subunit A of Bacteroides thetaiotaomicron (strain ATCC 29148 / DSM 2079 / JCM 5827 / CCUG 10774 / NCTC 10582 / VPI-5482 / E50).